Consider the following 179-residue polypeptide: Large ribosomal subunit protein uL16m (179 aa).

Belongs to the universal ribosomal protein uL16 family. In terms of assembly, component of the mitochondrial ribosome large subunit.

The protein localises to the mitochondrion. This is Large ribosomal subunit protein uL16m (RPL16) from Arabidopsis thaliana (Mouse-ear cress).